A 630-amino-acid polypeptide reads, in one-letter code: Mitochondrial Rho GTPase 1 (630 aa).

The 168-residue stretch at 1-168 (MKEVRVVICG…FYMCRACVIY (168 aa)) folds into the Miro 1 domain. The Cytoplasmic segment spans residues 1–598 (MKEVRVVICG…EEDSNKTNYQ (598 aa)). GTP is bound by residues 10-17 (GDQGVGKS), 57-61 (DTQSD), and 113-116 (NKSE). 2 consecutive EF-hand domains span residues 184 to 219 (ATIH…CFSK) and 304 to 339 (KGYR…TPGL). Residues D197, N199, D201, E208, D317, D319, D321, and E328 each coordinate Ca(2+). Positions 419–579 (RNVFLCFVVG…FIQLAESAQY (161 aa)) constitute a Miro 2 domain. GTP is bound by residues 428 to 435 (GSKSCGKT), 459 to 463 (EFQST), and 527 to 530 (TKAD). A helical; Anchor for type IV membrane protein transmembrane segment spans residues 599–619 (LVAALTAFGALLLSVGGSLTW). Over 620-630 (KIIKHQYYSKK) the chain is Mitochondrial intermembrane.

It belongs to the mitochondrial Rho GTPase family.

Its subcellular location is the mitochondrion outer membrane. Functionally, mitochondrial GTPase involved in mitochondrial trafficking. Probably involved in control of anterograde transport of mitochondria and their subcellular distribution. The polypeptide is Mitochondrial Rho GTPase 1 (gem1) (Schizosaccharomyces pombe (strain 972 / ATCC 24843) (Fission yeast)).